Here is a 465-residue protein sequence, read N- to C-terminus: VGFKAGVKEYKLTYYTPSYETKDTDILAAFRVTPQPGVPPEEAGAAVAAESSTGTWTTVWTDGLTSLDRYKGRCYHIEPVAGEETQFIAYVAYPLDLFEEGSVTNMFTSIVGNVFGFKALRALRLEDLRIPPAYVKTFQGPPHGIQVERDKLNKYGRPLLGCTIKPKLGLSAKNYGRAVYECLRGGLDFTKDDENVNSQPFMRWRDRFLFCTEALYKAQSETGEIKGHYLNATAGTCEEMIKRAVFARELGVPIVMHDYLTGGFTANTSLAHYCRDNGLLLHIHRAMHAVIDRQKNHGIHFRVLAKALRMSGGDHIHSGTVVGKLEGEREITLGFVDLLRDDFIEKDRSRGLFFTQDWVSLPGVLPVASGGIHVWHMPALTEIFGDDSVLQFGGGTLGHPWGNAPGAVANRVALEACVQARNEGRDLAREGNEIIREASKWSPELAAACEIWKEIKFEFEAMDTL.

Residue lysine 4 is modified to N6,N6,N6-trimethyllysine. 2 residues coordinate substrate: asparagine 113 and threonine 163. Lysine 165 acts as the Proton acceptor in catalysis. Lysine 167 is a substrate binding site. Mg(2+) contacts are provided by lysine 191, aspartate 193, and glutamate 194. Lysine 191 is modified (N6-carboxylysine). Residue histidine 284 is the Proton acceptor of the active site. Arginine 285, histidine 317, and serine 369 together coordinate substrate.

This sequence belongs to the RuBisCO large chain family. Type I subfamily. As to quaternary structure, heterohexadecamer of 8 large chains and 8 small chains; disulfide-linked. The disulfide link is formed within the large subunit homodimers. Mg(2+) serves as cofactor. In terms of processing, the disulfide bond which can form in the large chain dimeric partners within the hexadecamer appears to be associated with oxidative stress and protein turnover.

It is found in the plastid. Its subcellular location is the chloroplast. It carries out the reaction 2 (2R)-3-phosphoglycerate + 2 H(+) = D-ribulose 1,5-bisphosphate + CO2 + H2O. The enzyme catalyses D-ribulose 1,5-bisphosphate + O2 = 2-phosphoglycolate + (2R)-3-phosphoglycerate + 2 H(+). Its function is as follows. RuBisCO catalyzes two reactions: the carboxylation of D-ribulose 1,5-bisphosphate, the primary event in carbon dioxide fixation, as well as the oxidative fragmentation of the pentose substrate in the photorespiration process. Both reactions occur simultaneously and in competition at the same active site. In Cornus oblonga, this protein is Ribulose bisphosphate carboxylase large chain.